Consider the following 448-residue polypeptide: Adenylosuccinate synthetase (448 aa).

Residues 36–42 (GDEGKGK) and 64–66 (GHT) contribute to the GTP site. The Proton acceptor role is filled by D37. Mg(2+) is bound by residues D37 and G64. IMP-binding positions include 37–40 (DEGK), 62–65 (NAGH), T154, R168, N246, T261, and R325. Residue H65 is the Proton donor of the active site. 321-327 (VTTKRKR) is a binding site for substrate. Residues R327, 353–355 (KLD), and 436–438 (GVG) each bind GTP.

It belongs to the adenylosuccinate synthetase family. As to quaternary structure, homodimer. It depends on Mg(2+) as a cofactor.

The protein resides in the cytoplasm. It catalyses the reaction IMP + L-aspartate + GTP = N(6)-(1,2-dicarboxyethyl)-AMP + GDP + phosphate + 2 H(+). Its pathway is purine metabolism; AMP biosynthesis via de novo pathway; AMP from IMP: step 1/2. Plays an important role in the de novo pathway and in the salvage pathway of purine nucleotide biosynthesis. Catalyzes the first committed step in the biosynthesis of AMP from IMP. This is Adenylosuccinate synthetase from Drosophila virilis (Fruit fly).